We begin with the raw amino-acid sequence, 305 residues long: Serine/threonine-protein phosphatase PP1-delta (305 aa).

Mn(2+) is bound by residues Asp-62, His-64, Asp-90, and Asn-122. Catalysis depends on His-123, which acts as the Proton donor. 2 residues coordinate Mn(2+): His-172 and His-247.

It belongs to the PPP phosphatase family. In terms of tissue distribution, expressed in male germline including spermatocytes, spermatids and spermatozoa.

It localises to the chromosome. The protein resides in the cell projection. Its subcellular location is the pseudopodium. It is found in the cytoplasm. It carries out the reaction O-phospho-L-seryl-[protein] + H2O = L-seryl-[protein] + phosphate. The enzyme catalyses O-phospho-L-threonyl-[protein] + H2O = L-threonyl-[protein] + phosphate. Probable phosphatase which plays a redundant role with gsp-4 in spermatogenesis by regulating sister chromatid segregation during meiosis. In addition, involved in sperm motility by controlling the dynamic disassembly of major sperm proteins (MSP) in the spermatozoan pseudopodium. The protein is Serine/threonine-protein phosphatase PP1-delta of Caenorhabditis elegans.